Consider the following 162-residue polypeptide: Ribose-5-phosphate isomerase B (162 aa).

Residues 11–12 and 70–74 each bind D-ribulose 5-phosphate; these read DH and GSGNG. Catalysis depends on Glu75, which acts as the Proton acceptor. His102 functions as the Proton donor in the catalytic mechanism. 4 residues coordinate D-ribulose 5-phosphate: Asn103, Arg113, Arg137, and Arg141.

The protein belongs to the LacAB/RpiB family. In terms of assembly, homodimer.

The enzyme catalyses aldehydo-D-ribose 5-phosphate = D-ribulose 5-phosphate. It functions in the pathway carbohydrate degradation; pentose phosphate pathway; D-ribose 5-phosphate from D-ribulose 5-phosphate (non-oxidative stage): step 1/1. Functionally, catalyzes the interconversion of ribulose-5-P and ribose-5-P. The protein is Ribose-5-phosphate isomerase B of Mycobacterium leprae (strain TN).